The sequence spans 267 residues: Putative glycosyltransferase 63 (267 aa).

The protein belongs to the glycosyltransferase group 1 family. Glycosyltransferase 4 subfamily.

This is Putative glycosyltransferase 63 (SIFV0063) from Sulfolobus islandicus filamentous virus (isolate Iceland/Hveragerdi) (SIFV).